We begin with the raw amino-acid sequence, 145 residues long: Transmembrane protein CCDC163 (145 aa).

The helical transmembrane segment at 38–54 (LIGLCICFFCSSGCIFL) threads the bilayer.

It localises to the membrane. This is Transmembrane protein CCDC163 from Homo sapiens (Human).